The primary structure comprises 536 residues: MFKNALRRAGVAAPRISRVAQRGYAEAKATPTEVTSILEERIRGVSGEANLNETGRVLSVGDGIARVFGLNNIQAEELVEFASGVKGMALNLEAGQVGIVLFGSDRLVKEGETVKRSGSIVDVPVGPALLGRVVDALGNPIDGKGPIETEFRIRAQVKAPGILPRTSVNEPMQTGLKAVDALVPIGRGQRELIIGDRQTGKTQIAIDTILNQKRWNYGQDEKKKLYCVYVAVGQKRSTVAQLVQTLEHHDALKYSIIVAATASEAAPLQYLAPFTGTAMGEWFRDNGKGALIVFDDLSKQAVAYRQMSLLLRRPPGREAYPGDVFYLHSRLLERAAKMNEREGGGSLTALPIIETQGGDVSAYIPTNVISITDGQIFLEAELFYKGIRPAINVGLSVSRVGSAAQVKAMKQVAGSLKLFLAQYREVAAFAQFGSDLDASTKQTLTRGERLTLLLKQKQASPMSSEEMVPLIYAGVNGYIDNIPVKQVEKFEAEFVSYLHANESDLLKDIAATGELSKENLEKLKSITENFVGSFAK.

Residues 1 to 24 (MFKNALRRAGVAAPRISRVAQRGY) constitute a mitochondrion transit peptide. Residue 195–202 (GDRQTGKT) coordinates ATP.

In terms of assembly, F-type ATP synthases have 2 components, the catalytic core F(1) and the membrane-embedded component F(0), linked together by a central stalk and a peripheral stalk. The central stalk, also called rotor shaft, is often seen as part of F(1). The peripheral stalk is seen as part of F(0). F(0) contains the membrane channel next to the rotor. F-type ATP synthases form dimers but each monomer functions independently in ATP generation. The dimer consists of 17 different polypeptides: ATP1 (subunit alpha, 3 molecules per monomer, part of F(1)), ATP2 (subunit beta, 3 copies per monomer, part of F(1)), ATP3 (subunit gamma, part of the central stalk), ATP4 (subunit b, part of the peripheral stalk), ATP5/OSCP (subunit 5/OSCP, part of the peripheral stalk), ATP6 (subunit a, part of the peripheral stalk), ATP7 (subunit d, part of the peripheral stalk), ATP8 (subunit 8, part of the peripheral stalk), OLI1 (subunit c, part of the rotor, 10 molecules per monomer), ATP14 (subunit h, part of the peripheral stalk), ATP15 (subunit epsilon, part of the central stalk), ATP16 (subunit delta, part of the central stalk), ATP17 (subunit f, part of the peripheral stalk), ATP18 (subunit i/j, part of the peripheral stalk), ATP19 (subunit k, dimer-specific, at interface between monomers), ATP20 (subunit g, at interface between monomers), TIM11 (subunit e, at interface between monomers).

The protein localises to the mitochondrion inner membrane. In terms of biological role, mitochondrial membrane ATP synthase (F(1)F(0) ATP synthase or Complex V) produces ATP from ADP in the presence of a proton gradient across the membrane which is generated by electron transport complexes of the respiratory chain. F-type ATP synthases consist of two structural domains, F(1) - containing the extramembraneous catalytic core, and F(0) - containing the membrane proton channel, linked together by a central stalk and a peripheral stalk. During catalysis, ATP synthesis in the catalytic domain of F(1) is coupled via a rotary mechanism of the central stalk subunits to proton translocation. Subunits alpha/ATP1 and beta/ATP2 form the catalytic core in F(1). Rotation of the central stalk against the surrounding alpha/ATP1(3)beta/ATP2(3) subunits leads to hydrolysis of ATP in three separate catalytic sites on the beta/ATP2 subunits. Subunit alpha/ATP1 does not bear the catalytic high-affinity ATP-binding sites. In Yarrowia lipolytica (strain CLIB 122 / E 150) (Yeast), this protein is ATP synthase subunit alpha, mitochondrial.